Reading from the N-terminus, the 35-residue chain is Manganese peroxidase (35 aa).

Over residues 1-11 (LSLLGHDERVT) the composition is skewed to basic and acidic residues. The interval 1–35 (LSLLGHDERVTPEPFDSVTAQNARGNQADVQSLPR) is disordered. The span at 18–35 (VTAQNARGNQADVQSLPR) shows a compositional bias: polar residues.

It belongs to the peroxidase family. The cofactor is heme b. It depends on Ca(2+) as a cofactor.

It carries out the reaction 2 Mn(2+) + H2O2 + 2 H(+) = 2 Mn(3+) + 2 H2O. Its function is as follows. Has manganese peroxidase activity. This chain is Manganese peroxidase, found in Irpex lacteus (Milk-white toothed polypore).